The following is a 218-amino-acid chain: Heart- and neural crest derivatives-expressed protein 1 (218 aa).

Disordered regions lie at residues 1–23 (MNLV…HPAH), 56–112 (APDF…RTES), and 172–203 (ADGG…RIKG). Residues 8-21 (AHHHHHHHHHHPHP) show a composition bias toward basic residues. Positions 68–92 (AAAAAASYGPDARPGQSPGRLEALG) are enriched in low complexity. Residues 95–107 (LGRRKGSGPKKER) show a composition bias toward basic residues. One can recognise a bHLH domain in the interval 97–149 (RRKGSGPKKERRRTESINSAFAELRECIPNVPADTKLSKIKTLRLATSYIAYL). T110 carries the post-translational modification Phosphothreonine; by PLK4. Phosphoserine; by PLK4 is present on S112.

As to quaternary structure, efficient DNA binding requires dimerization with another bHLH protein. Forms homodimers and heterodimers with TCF3 gene products E12 and E47, HAND2 and HEY1, HEY2 and HEYL (hairy-related transcription factors). Interacts with MDFIC. Interacts with SOX15; the interaction enhances HAND1-induced differentiation of trophoblast giant cells. In terms of processing, phosphorylation by PLK4 disrupts the interaction with MDFIC and leads to translocation into the nucleoplasm, allowing dimerization and transcription factor activity.

It is found in the nucleus. Its subcellular location is the nucleoplasm. The protein resides in the nucleolus. Functionally, transcription factor that plays an essential role in both trophoblast giant cell differentiation and in cardiac morphogenesis. Binds the DNA sequence 5'-NRTCTG-3' (non-canonical E-box). Acts as a transcriptional repressor of SOX15. In the adult, could be required for ongoing expression of cardiac-specific genes. The sequence is that of Heart- and neural crest derivatives-expressed protein 1 (HAND1) from Bos taurus (Bovine).